A 939-amino-acid chain; its full sequence is Probable importin ECU10_0620 (939 aa).

Positions 23-90 constitute an Importin N-terminal domain; that stretch reads AEAMLMDLEK…VENILDLFLY (68 aa).

The protein belongs to the importin beta family.

It localises to the nucleus. The protein localises to the cytoplasm. Active in protein import into the nucleus. The chain is Probable importin ECU10_0620 from Encephalitozoon cuniculi (strain GB-M1) (Microsporidian parasite).